Reading from the N-terminus, the 72-residue chain is Translation initiation factor IF-1 (72 aa).

An S1-like domain is found at M1–K72.

Belongs to the IF-1 family. Component of the 30S ribosomal translation pre-initiation complex which assembles on the 30S ribosome in the order IF-2 and IF-3, IF-1 and N-formylmethionyl-tRNA(fMet); mRNA recruitment can occur at any time during PIC assembly.

It is found in the cytoplasm. Functionally, one of the essential components for the initiation of protein synthesis. Stabilizes the binding of IF-2 and IF-3 on the 30S subunit to which N-formylmethionyl-tRNA(fMet) subsequently binds. Helps modulate mRNA selection, yielding the 30S pre-initiation complex (PIC). Upon addition of the 50S ribosomal subunit IF-1, IF-2 and IF-3 are released leaving the mature 70S translation initiation complex. The sequence is that of Translation initiation factor IF-1 from Koribacter versatilis (strain Ellin345).